The primary structure comprises 451 residues: UPF0210 protein NMC1568 (451 aa).

Belongs to the UPF0210 family. Homodimer.

In Neisseria meningitidis serogroup C / serotype 2a (strain ATCC 700532 / DSM 15464 / FAM18), this protein is UPF0210 protein NMC1568.